We begin with the raw amino-acid sequence, 557 residues long: Dihydroxy-acid dehydratase (557 aa).

A Mg(2+)-binding site is contributed by Asp-78. Cys-119 is a binding site for [2Fe-2S] cluster. Mg(2+) is bound by residues Asp-120 and Lys-121. Lys-121 bears the N6-carboxylysine mark. Cys-192 contributes to the [2Fe-2S] cluster binding site. Glu-442 lines the Mg(2+) pocket. Catalysis depends on Ser-468, which acts as the Proton acceptor.

Belongs to the IlvD/Edd family. In terms of assembly, homodimer. Requires [2Fe-2S] cluster as cofactor. Mg(2+) serves as cofactor.

The catalysed reaction is (2R)-2,3-dihydroxy-3-methylbutanoate = 3-methyl-2-oxobutanoate + H2O. The enzyme catalyses (2R,3R)-2,3-dihydroxy-3-methylpentanoate = (S)-3-methyl-2-oxopentanoate + H2O. It functions in the pathway amino-acid biosynthesis; L-isoleucine biosynthesis; L-isoleucine from 2-oxobutanoate: step 3/4. The protein operates within amino-acid biosynthesis; L-valine biosynthesis; L-valine from pyruvate: step 3/4. Functions in the biosynthesis of branched-chain amino acids. Catalyzes the dehydration of (2R,3R)-2,3-dihydroxy-3-methylpentanoate (2,3-dihydroxy-3-methylvalerate) into 2-oxo-3-methylpentanoate (2-oxo-3-methylvalerate) and of (2R)-2,3-dihydroxy-3-methylbutanoate (2,3-dihydroxyisovalerate) into 2-oxo-3-methylbutanoate (2-oxoisovalerate), the penultimate precursor to L-isoleucine and L-valine, respectively. The protein is Dihydroxy-acid dehydratase of Bacillus cytotoxicus (strain DSM 22905 / CIP 110041 / 391-98 / NVH 391-98).